We begin with the raw amino-acid sequence, 229 residues long: HTH-type transcriptional regulator HbdR (229 aa).

Residues E20 to Y80 form the HTH tetR-type domain. The H-T-H motif DNA-binding region spans T43–F62.

In terms of assembly, homodimer in solution.

Its activity is regulated as follows. Activity is regulated by the effector molecules 3-hydroxybenzoyl-CoA and benzoyl-CoA, which bind to HbdR, alleviating its repression on the three target promoters and inducing the expression of the hbd genes. Functionally, transcriptional regulator that controls the expression of the hbd cluster, which contains three catabolic operons and is responsible for the anaerobic degradation of 3-hydroxybenzoate. HbdR suppresses the activity of the three catabolic promoters (PhbdN, PhbdE and PhbdH) by binding to a conserved palindromic operator box. In addition, it slightly increases activity of its own promoter (PhbdR). The HbdR-mediated repression of hbd genes may play a crucial biological role in maintaining requisite hydroxybenzoate levels in the cell. The polypeptide is HTH-type transcriptional regulator HbdR (Aromatoleum sp. (strain CIB) (Azoarcus sp. (strain CIB))).